A 277-amino-acid polypeptide reads, in one-letter code: Diaminopimelate epimerase (277 aa).

Substrate-binding residues include Asn13, Gln46, and Asn66. Cys75 (proton donor) is an active-site residue. Substrate-binding positions include 76–77 (GN), Asn160, Asn193, and 211–212 (ER). The active-site Proton acceptor is the Cys220. 221–222 (GT) contacts substrate.

Belongs to the diaminopimelate epimerase family. As to quaternary structure, homodimer.

Its subcellular location is the cytoplasm. It catalyses the reaction (2S,6S)-2,6-diaminopimelate = meso-2,6-diaminopimelate. Its pathway is amino-acid biosynthesis; L-lysine biosynthesis via DAP pathway; DL-2,6-diaminopimelate from LL-2,6-diaminopimelate: step 1/1. Its function is as follows. Catalyzes the stereoinversion of LL-2,6-diaminopimelate (L,L-DAP) to meso-diaminopimelate (meso-DAP), a precursor of L-lysine and an essential component of the bacterial peptidoglycan. In Saccharophagus degradans (strain 2-40 / ATCC 43961 / DSM 17024), this protein is Diaminopimelate epimerase.